Reading from the N-terminus, the 140-residue chain is MEWMKIDQVAKRSGLTKRTIRFYEEIGLIPAPKRTDGGVRLYSEDDMEELEKVISTKEVLGFSLQELQHFMETSRQLELNKEGYLLSLDPKERKEKLEEIQETLNHQLDLIDEKIRTFQSFKERLQGMKGKAERAIQSIE.

One can recognise an HTH merR-type domain in the interval 1–73 (MEWMKIDQVA…LQELQHFMET (73 aa)). The segment at residues 6–25 (IDQVAKRSGLTKRTIRFYEE) is a DNA-binding region (H-T-H motif).

Repressor of the yfmOP operon. A mutation in yfmP leads to overexpression of yfmO, probably causing a decrease in cellular copper that is eventually responsible for a reduced copper induction of copZA. In Bacillus subtilis (strain 168), this protein is HTH-type transcriptional regulator YfmP (yfmP).